The primary structure comprises 215 residues: Outer-membrane lipoprotein LolB (215 aa).

Residues 1-21 form the signal peptide; the sequence is MLIPKKYYLLIILLSNCLLAS. Residue Cys22 is the site of N-palmitoyl cysteine attachment. A lipid anchor (S-diacylglycerol cysteine) is attached at Cys22.

Belongs to the LolB family. As to quaternary structure, monomer.

The protein localises to the cell outer membrane. Its function is as follows. Plays a critical role in the incorporation of lipoproteins in the outer membrane after they are released by the LolA protein. The sequence is that of Outer-membrane lipoprotein LolB from Baumannia cicadellinicola subsp. Homalodisca coagulata.